A 241-amino-acid polypeptide reads, in one-letter code: Large ribosomal subunit protein uL3 (241 aa).

Disordered stretches follow at residues 140-168 (SHRS…HMGD) and 216-241 (APKP…EEGA). Glutamine 151 bears the N5-methylglutamine mark.

Belongs to the universal ribosomal protein uL3 family. In terms of assembly, part of the 50S ribosomal subunit. Forms a cluster with proteins L14 and L19. In terms of processing, methylated by PrmB.

Functionally, one of the primary rRNA binding proteins, it binds directly near the 3'-end of the 23S rRNA, where it nucleates assembly of the 50S subunit. The chain is Large ribosomal subunit protein uL3 from Xanthobacter autotrophicus (strain ATCC BAA-1158 / Py2).